The following is a 446-amino-acid chain: Probable D-serine dehydratase (446 aa).

Residue lysine 113 is modified to N6-(pyridoxal phosphate)lysine.

The protein belongs to the serine/threonine dehydratase family. DsdA subfamily. Requires pyridoxal 5'-phosphate as cofactor.

It carries out the reaction D-serine = pyruvate + NH4(+). This is Probable D-serine dehydratase from Burkholderia lata (strain ATCC 17760 / DSM 23089 / LMG 22485 / NCIMB 9086 / R18194 / 383).